Reading from the N-terminus, the 156-residue chain is Ribosomal RNA large subunit methyltransferase H (156 aa).

Residues leucine 72, glycine 104, and phenylalanine 123–tryptophan 128 contribute to the S-adenosyl-L-methionine site.

The protein belongs to the RNA methyltransferase RlmH family. As to quaternary structure, homodimer.

It is found in the cytoplasm. It carries out the reaction pseudouridine(1915) in 23S rRNA + S-adenosyl-L-methionine = N(3)-methylpseudouridine(1915) in 23S rRNA + S-adenosyl-L-homocysteine + H(+). Its function is as follows. Specifically methylates the pseudouridine at position 1915 (m3Psi1915) in 23S rRNA. The polypeptide is Ribosomal RNA large subunit methyltransferase H (Ruegeria pomeroyi (strain ATCC 700808 / DSM 15171 / DSS-3) (Silicibacter pomeroyi)).